The primary structure comprises 543 residues: Excitatory amino acid transporter 1 (543 aa).

The Cytoplasmic segment spans residues 1 to 47 (MTKSNGEDPRAGSRMERFQQGVRQRTLLAKKKVQNITKDDVKGFLKR). The chain crosses the membrane as a helical span at residues 48-68 (NGFVLFTVIAVVVGSILGFSV). At 69-86 (RSYHMTFRELKYFSFPGE) the chain is on the extracellular side. The helical transmembrane segment at 87-108 (LLMRMLQMLVLPLIVSSLVTGM) threads the bilayer. The Cytoplasmic segment spans residues 109–122 (AALDSKASGKMGLR). A helical membrane pass occupies residues 123–145 (AVVYYMTTTVIAVFIGIVIVIIV). Topologically, residues 146–237 (HPGKGTKEHM…MREEMIPVPG (92 aa)) are extracellular. N-linked (GlcNAc...) asparagine glycosylation is found at Asn206 and Asn217. A helical transmembrane segment spans residues 238–261 (AVNGVNALGLVVFSMCFGLVIGNM). Over 262–270 (KEQGKALKD) the chain is Cytoplasmic. A helical transmembrane segment spans residues 271 to 298 (FFDSLNEAIMRLVAVIMWYAPIGILFLI). At 299–319 (AGKIAEMEDMGVVGGQLGMYT) the chain is on the extracellular side. The chain crosses the membrane as a helical span at residues 320 to 341 (VTVIIGLLIHAVIVLPLLYFAV). Topologically, residues 342-346 (TRKNP) are cytoplasmic. Positions 347 to 377 (WVFIGGILQALITALGTSSSSATLPITFKCL) form an intramembrane region, discontinuously helical. 364–366 (SSS) is a binding site for L-aspartate. At 378–386 (EENNKVDKR) the chain is on the cytoplasmic side. Residues 387–413 (VTRFVLPVGATINMDGTALYEALAAIF) traverse the membrane as a helical segment. Residues Gly395, Thr397, and Asn399 each coordinate Na(+). Position 403 (Thr403) interacts with L-aspartate. Topologically, residues 414-426 (IAQVNNYDLNFGQ) are extracellular. Positions 427–460 (ILTISITATAASIGAAGIPQAGLVTMVIVLTSVG) form an intramembrane region, discontinuously helical. 444-448 (IPQAG) is an L-aspartate binding site. At 461-473 (LPTDDITLIIAVD) the chain is on the extracellular side. A helical membrane pass occupies residues 474-495 (WFLDRLRTTTNVLGDSLGAGIV). L-aspartate is bound by residues Asp477 and Asn484. Na(+) is bound by residues Asn484 and Asp488. At 496-543 (EHLSRHELQSGDAEMGNSVIEENEMKKPYQLVSQENELEKPIDSETKM) the chain is on the cytoplasmic side. Residues 521-543 (KKPYQLVSQENELEKPIDSETKM) are disordered. Residues 532 to 543 (ELEKPIDSETKM) are compositionally biased toward basic and acidic residues.

It belongs to the dicarboxylate/amino acid:cation symporter (DAACS) (TC 2.A.23) family. In terms of assembly, homotrimer. In terms of tissue distribution, detected in retina (at protein level).

It is found in the cell membrane. The catalysed reaction is K(+)(in) + L-glutamate(out) + 3 Na(+)(out) + H(+)(out) = K(+)(out) + L-glutamate(in) + 3 Na(+)(in) + H(+)(in). It carries out the reaction K(+)(in) + L-aspartate(out) + 3 Na(+)(out) + H(+)(out) = K(+)(out) + L-aspartate(in) + 3 Na(+)(in) + H(+)(in). It catalyses the reaction D-aspartate(out) + K(+)(in) + 3 Na(+)(out) + H(+)(out) = D-aspartate(in) + K(+)(out) + 3 Na(+)(in) + H(+)(in). Sodium-dependent, high-affinity amino acid transporter that mediates the uptake of L-glutamate and also L-aspartate and D-aspartate. Functions as a symporter that transports one amino acid molecule together with two or three Na(+) ions and one proton, in parallel with the counter-transport of one K(+) ion. Plays a redundant role in the rapid removal of released glutamate from the synaptic cleft, which is essential for terminating the postsynaptic action of glutamate. This Ambystoma tigrinum (Eastern tiger salamander) protein is Excitatory amino acid transporter 1 (SLC1A3).